A 273-amino-acid polypeptide reads, in one-letter code: Dermonecrotic toxin LsaSicTox-alphaIB1ai (273 aa).

Residue histidine 5 is part of the active site. Mg(2+)-binding residues include glutamate 25 and aspartate 27. Histidine 41 (nucleophile) is an active-site residue. 2 disulfides stabilise this stretch: cysteine 45–cysteine 51 and cysteine 47–cysteine 190. Residue aspartate 85 participates in Mg(2+) binding.

It belongs to the arthropod phospholipase D family. Class II subfamily. Mg(2+) serves as cofactor. Expressed by the venom gland.

Its subcellular location is the secreted. The catalysed reaction is an N-(acyl)-sphingosylphosphocholine = an N-(acyl)-sphingosyl-1,3-cyclic phosphate + choline. It catalyses the reaction an N-(acyl)-sphingosylphosphoethanolamine = an N-(acyl)-sphingosyl-1,3-cyclic phosphate + ethanolamine. It carries out the reaction a 1-acyl-sn-glycero-3-phosphocholine = a 1-acyl-sn-glycero-2,3-cyclic phosphate + choline. The enzyme catalyses a 1-acyl-sn-glycero-3-phosphoethanolamine = a 1-acyl-sn-glycero-2,3-cyclic phosphate + ethanolamine. Dermonecrotic toxins cleave the phosphodiester linkage between the phosphate and headgroup of certain phospholipids (sphingolipid and lysolipid substrates), forming an alcohol (often choline) and a cyclic phosphate. This toxin acts on sphingomyelin (SM). It may also act on ceramide phosphoethanolamine (CPE), lysophosphatidylcholine (LPC) and lysophosphatidylethanolamine (LPE), but not on lysophosphatidylserine (LPS), and lysophosphatidylglycerol (LPG). It acts by transphosphatidylation, releasing exclusively cyclic phosphate products as second products. Induces dermonecrosis, hemolysis, increased vascular permeability, edema, inflammatory response, and platelet aggregation. The protein is Dermonecrotic toxin LsaSicTox-alphaIB1ai of Loxosceles sabina (Tucson recluse spider).